The sequence spans 375 residues: Homeobox protein Meis3 (375 aa).

The tract at residues Pro25–Asp51 is disordered. The span at Val31–Pro46 shows a compositional bias: pro residues. The 84-residue stretch at Gly96–Asp179 folds into the MEIS N-terminal domain. Disordered stretches follow at residues Pro197–Ile268 and Asn329–Thr348. Over residues Ser227–Asp241 the composition is skewed to low complexity. Residues Arg262 to Met324 constitute a DNA-binding region (homeobox; TALE-type).

It belongs to the TALE/MEIS homeobox family.

It localises to the nucleus. Functionally, transcriptional regulator which directly modulates PDPK1 expression, thus promoting survival of pancreatic beta-cells. Also regulates expression of NDFIP1, BNIP3, and CCNG1. The sequence is that of Homeobox protein Meis3 (MEIS3) from Homo sapiens (Human).